The primary structure comprises 95 residues: Defensin-like protein 232 (95 aa).

The first 26 residues, 1 to 26 (MRCTTLIMVSFVVSCLLLSLVEESEA), serve as a signal peptide directing secretion. Intrachain disulfides connect C33–C94, C43–C68, C51–C84, and C66–C86.

The protein belongs to the DEFL family. Flower buds.

The protein localises to the secreted. This Arabidopsis thaliana (Mouse-ear cress) protein is Defensin-like protein 232 (SCRL23).